The chain runs to 318 residues: NADH-ubiquinone oxidoreductase chain 1 (318 aa).

8 consecutive transmembrane segments (helical) span residues 2 to 22, 70 to 90, 100 to 120, 147 to 167, 172 to 192, 222 to 242, 253 to 273, and 294 to 314; these read FMIN…FLTL, MFIL…IPLP, LGVL…LWSG, AIIL…TLII, TWLI…TLAE, LFFM…AILF, ELYT…FLWI, and LPLT…TSGI.

It belongs to the complex I subunit 1 family. In terms of assembly, core subunit of respiratory chain NADH dehydrogenase (Complex I) which is composed of 45 different subunits.

The protein resides in the mitochondrion inner membrane. It carries out the reaction a ubiquinone + NADH + 5 H(+)(in) = a ubiquinol + NAD(+) + 4 H(+)(out). Core subunit of the mitochondrial membrane respiratory chain NADH dehydrogenase (Complex I) which catalyzes electron transfer from NADH through the respiratory chain, using ubiquinone as an electron acceptor. Essential for the catalytic activity and assembly of complex I. This Bos mutus grunniens (Wild yak) protein is NADH-ubiquinone oxidoreductase chain 1 (MT-ND1).